A 102-amino-acid polypeptide reads, in one-letter code: Protein PAPPAS (102 aa).

Helical transmembrane passes span 13–33 and 82–102; these read LFLTTVAALPIWNPISEFVKW and IGSDIIWWFLKLFLVSFFFFF.

In terms of tissue distribution, expressed in placenta with lower expression in brain, kidney and testis.

Its subcellular location is the endoplasmic reticulum membrane. This Homo sapiens (Human) protein is Protein PAPPAS (PAPPA-AS1).